The primary structure comprises 390 residues: Dual-specificity RNA methyltransferase RlmN (390 aa).

Residue E110 is the Proton acceptor of the active site. The Radical SAM core domain maps to 116-355 (EADRATLCVS…VIIRKTRGDD (240 aa)). Cysteines 123 and 360 form a disulfide. [4Fe-4S] cluster contacts are provided by C130, C134, and C137. Residues 184-185 (GE), S216, 238-240 (SLH), and N317 contribute to the S-adenosyl-L-methionine site. C360 functions as the S-methylcysteine intermediate in the catalytic mechanism.

It belongs to the radical SAM superfamily. RlmN family. [4Fe-4S] cluster serves as cofactor.

The protein localises to the cytoplasm. The enzyme catalyses adenosine(2503) in 23S rRNA + 2 reduced [2Fe-2S]-[ferredoxin] + 2 S-adenosyl-L-methionine = 2-methyladenosine(2503) in 23S rRNA + 5'-deoxyadenosine + L-methionine + 2 oxidized [2Fe-2S]-[ferredoxin] + S-adenosyl-L-homocysteine. It catalyses the reaction adenosine(37) in tRNA + 2 reduced [2Fe-2S]-[ferredoxin] + 2 S-adenosyl-L-methionine = 2-methyladenosine(37) in tRNA + 5'-deoxyadenosine + L-methionine + 2 oxidized [2Fe-2S]-[ferredoxin] + S-adenosyl-L-homocysteine. Its function is as follows. Specifically methylates position 2 of adenine 2503 in 23S rRNA and position 2 of adenine 37 in tRNAs. m2A2503 modification seems to play a crucial role in the proofreading step occurring at the peptidyl transferase center and thus would serve to optimize ribosomal fidelity. The protein is Dual-specificity RNA methyltransferase RlmN of Haemophilus influenzae (strain 86-028NP).